Reading from the N-terminus, the 140-residue chain is Profilin (140 aa).

S2 carries the N-acetylserine modification.

Belongs to the profilin family. In terms of assembly, occurs in many kinds of cells as a complex with monomeric actin in a 1:1 ratio.

The protein localises to the cytoplasm. Its subcellular location is the cytoskeleton. Its function is as follows. Binds to actin and affects the structure of the cytoskeleton. At high concentrations, profilin prevents the polymerization of actin, whereas it enhances it at low concentrations. By binding to PIP2, it inhibits the formation of IP3 and DG. This is Profilin from Clypeaster japonicus (Sand dollar).